Here is a 448-residue protein sequence, read N- to C-terminus: 4-hydroxybenzoate transporter PcaK (448 aa).

Residues 1-30 lie on the Cytoplasmic side of the membrane; that stretch reads MNSPSLPAVERLDVQAFINAQPLSPYQWRI. A helical membrane pass occupies residues 31–51; the sequence is VLLCFLIVFLDGLDTAAMGFI. The Periplasmic portion of the chain corresponds to 52–67; the sequence is APALTQDWGIDRASLG. Residues 68 to 88 traverse the membrane as a helical segment; sequence PVMSAALIGMVFGALGSGPLA. At 89 to 94 the chain is on the cytoplasmic side; sequence DRYGRK. A helical membrane pass occupies residues 95–115; that stretch reads LVLVAAVFLFGLFSLASAYST. Topologically, residues 116–119 are periplasmic; that stretch reads NVEQ. Residues 120-140 traverse the membrane as a helical segment; that stretch reads LLALRFLTGLGLGAAMPNATT. Topologically, residues 141 to 152 are cytoplasmic; sequence LLSEYTPERLKS. A helical transmembrane segment spans residues 153-173; that stretch reads LLVTSMFCGFNLGMACGGFVS. Residues 174–184 lie on the Periplasmic side of the membrane; the sequence is AKLIPLFGWHS. The helical transmembrane segment at 185 to 205 threads the bilayer; the sequence is LLLLGGLLPLVLAVVLLFRLP. Residues 206-261 are Cytoplasmic-facing; it reads ESARYLVVRNRGSERVRQVLAPIAPAQVALARSFHVPEQQTVQARNVFAVIFSGTY. Residues 262-282 form a helical membrane-spanning segment; it reads SAGTLLLWLTYFMGLVIVYLL. Residues 283-301 are Periplasmic-facing; sequence TSWLPTLMRDSGASLEQAA. A helical transmembrane segment spans residues 302–322; it reads FIGALFQFGGVLSAVAVGWAM. Residues 323–329 lie on the Cytoplasmic side of the membrane; sequence DRFNPHK. The helical transmembrane segment at 330–350 threads the bilayer; it reads VIGLFYLLAGVFAWCVGQSLG. Position 351 (glutamine 351) is a topological domain, periplasmic. The chain crosses the membrane as a helical span at residues 352–372; that stretch reads VTLLATLVLLAGMCINGAQSA. The Cytoplasmic segment spans residues 373-398; the sequence is MPSLAARFYPTQGRATGVSWMLGIGR. The chain crosses the membrane as a helical span at residues 399–419; the sequence is FGAILGAWIGATLLGLGWNFE. Residues 420 to 421 are Periplasmic-facing; the sequence is QV. Residues 422 to 442 form a helical membrane-spanning segment; sequence LTALVLPAALATAAVLLKGLV. The Cytoplasmic segment spans residues 443–448; sequence SHADAG.

The protein belongs to the major facilitator superfamily. Aromatic acid:H(+) symporter (AAHS) (TC 2.A.1.15) family.

The protein localises to the cell inner membrane. Functionally, transports 4-hydroxybenzoate (4-HBA) and protocatechuate across the membrane. Driven by the proton motive force. Also functions as a chemoreceptor, which is required for chemotaxis to aromatic acids. The chain is 4-hydroxybenzoate transporter PcaK (pcaK) from Pseudomonas aeruginosa (strain ATCC 15692 / DSM 22644 / CIP 104116 / JCM 14847 / LMG 12228 / 1C / PRS 101 / PAO1).